We begin with the raw amino-acid sequence, 168 residues long: Transcriptional repressor NrdR (168 aa).

Residues 3–34 (CPFCQDAENKVIDSRESHEGSVIRRRRECLTC) fold into a zinc finger. One can recognise an ATP-cone domain in the interval 49-139 (PLIVKKDGRR…VYRSFRDIAE (91 aa)).

The protein belongs to the NrdR family. It depends on Zn(2+) as a cofactor.

Functionally, negatively regulates transcription of bacterial ribonucleotide reductase nrd genes and operons by binding to NrdR-boxes. This Myxococcus xanthus (strain DK1622) protein is Transcriptional repressor NrdR.